The chain runs to 151 residues: Transcriptional repressor NrdR (151 aa).

A zinc finger spans residues 3–34 (CPYCAYGESKVVDSRSTEDGSSIRRRRECLKC). The 91-residue stretch at 49–139 (ILVIKKNMSR…VYRQFKDINT (91 aa)) folds into the ATP-cone domain.

This sequence belongs to the NrdR family. It depends on Zn(2+) as a cofactor.

Its function is as follows. Negatively regulates transcription of bacterial ribonucleotide reductase nrd genes and operons by binding to NrdR-boxes. The sequence is that of Transcriptional repressor NrdR from Clostridium botulinum (strain Loch Maree / Type A3).